Reading from the N-terminus, the 375-residue chain is Growth/differentiation factor 8 (375 aa).

The N-terminal stretch at 1 to 23 (MQKLQIYVYIYLFMLIVAGPVDL) is a signal peptide. The propeptide occupies 24 to 266 (NENSEQKENV…VTDTPKRSRR (243 aa)). N-linked (GlcNAc...) asparagine glycosylation is present at Asn71. 4 disulfides stabilise this stretch: Cys272–Cys282, Cys281–Cys340, Cys309–Cys372, and Cys313–Cys374.

It belongs to the TGF-beta family. In terms of assembly, homodimer; disulfide-linked. Interacts with WFIKKN2, leading to inhibit its activity. Interacts with FSTL3. In terms of processing, synthesized as large precursor molecule that undergoes proteolytic cleavage to generate an N-terminal propeptide and a disulfide linked C-terminal dimer, which is the biologically active molecule. The circulating form consists of a latent complex of the C-terminal dimer and other proteins, including its propeptide, which maintain the C-terminal dimer in a latent, inactive state. Ligand activation requires additional cleavage of the prodomain by a tolloid-like metalloproteinase.

The protein resides in the secreted. Acts specifically as a negative regulator of skeletal muscle growth. The polypeptide is Growth/differentiation factor 8 (MSTN) (Sus scrofa (Pig)).